The following is a 162-amino-acid chain: Cytochrome c-type biogenesis protein CcmE (162 aa).

Topologically, residues 1-8 (MNPVRKKR) are cytoplasmic. Residues 9–29 (LIIVLAIVVGVGAAVGLALSA) form a helical; Signal-anchor for type II membrane protein membrane-spanning segment. Topologically, residues 30 to 162 (LQQNINLFYT…GETSYNQEGK (133 aa)) are periplasmic. Residues His-124 and Tyr-128 each coordinate heme. Positions 139–148 (DSGQLKHYEN) are enriched in basic and acidic residues. The tract at residues 139–162 (DSGQLKHYENGKAAGETSYNQEGK) is disordered.

The protein belongs to the CcmE/CycJ family.

The protein resides in the cell inner membrane. Functionally, heme chaperone required for the biogenesis of c-type cytochromes. Transiently binds heme delivered by CcmC and transfers the heme to apo-cytochromes in a process facilitated by CcmF and CcmH. The protein is Cytochrome c-type biogenesis protein CcmE of Pseudomonas aeruginosa (strain LESB58).